The chain runs to 708 residues: Leukotoxin translocation ATP-binding protein LktB (708 aa).

One can recognise a Peptidase C39 domain in the interval 1–126 (MEANHQRNDL…ACYQGQLILV (126 aa)). The ABC transmembrane type-1 domain occupies 155–437 (FLETLIVSIF…LAQLWQDFQQ (283 aa)). The next 5 helical transmembrane spans lie at 159–179 (LIVS…FQVV), 192–212 (LNII…LSGL), 270–290 (ALTS…MWYY), 296–316 (LVIL…SPIL), and 389–409 (VMVI…LSIG). An ABC transporter domain is found at 469-704 (ISFKNIRFRY…SNGLYSYLHQ (236 aa)). 503-510 (GRSGSGKS) serves as a coordination point for ATP.

The protein belongs to the ABC transporter superfamily. Protein-1 exporter (TC 3.A.1.109) family. In terms of assembly, homodimer.

It localises to the cell inner membrane. It catalyses the reaction ATP + H2O + proteinSide 1 = ADP + phosphate + proteinSide 2.. Part of the ABC transporter complex LktBD involved in leukotoxin export. Transmembrane domains (TMD) form a pore in the inner membrane and the ATP-binding domain (NBD) is responsible for energy generation. In Mannheimia haemolytica (Pasteurella haemolytica), this protein is Leukotoxin translocation ATP-binding protein LktB (lktB).